The primary structure comprises 641 residues: Chaperone protein HtpG (641 aa).

An a; substrate-binding region spans residues 1 to 348 (MTTATEKQTL…SNDLSLNVSR (348 aa)). The segment at 349–565 (EILQNDKAVE…AYDMGVQMRR (217 aa)) is b. Residues 566-641 (IMEAAGQALP…KLLLELSNAG (76 aa)) form a c region.

The protein belongs to the heat shock protein 90 family. As to quaternary structure, homodimer.

It localises to the cytoplasm. Functionally, molecular chaperone. Has ATPase activity. The chain is Chaperone protein HtpG from Hahella chejuensis (strain KCTC 2396).